Consider the following 219-residue polypeptide: 2-hydroxy-3-keto-5-methylthiopentenyl-1-phosphate phosphatase (219 aa).

Belongs to the HAD-like hydrolase superfamily. MtnX family.

The enzyme catalyses 2-hydroxy-5-methylsulfanyl-3-oxopent-1-enyl phosphate + H2O = 1,2-dihydroxy-5-(methylsulfanyl)pent-1-en-3-one + phosphate. The protein operates within amino-acid biosynthesis; L-methionine biosynthesis via salvage pathway; L-methionine from S-methyl-5-thio-alpha-D-ribose 1-phosphate: step 4/6. Its function is as follows. Dephosphorylates 2-hydroxy-3-keto-5-methylthiopentenyl-1-phosphate (HK-MTPenyl-1-P) yielding 1,2-dihydroxy-3-keto-5-methylthiopentene (DHK-MTPene). The polypeptide is 2-hydroxy-3-keto-5-methylthiopentenyl-1-phosphate phosphatase (Bacillus cereus (strain ZK / E33L)).